The following is a 297-amino-acid chain: 4-hydroxy-tetrahydrodipicolinate synthase (297 aa).

T49 contacts pyruvate. Y137 (proton donor/acceptor) is an active-site residue. The Schiff-base intermediate with substrate role is filled by K166. A pyruvate-binding site is contributed by I208.

It belongs to the DapA family. In terms of assembly, homotetramer; dimer of dimers.

It is found in the cytoplasm. The enzyme catalyses L-aspartate 4-semialdehyde + pyruvate = (2S,4S)-4-hydroxy-2,3,4,5-tetrahydrodipicolinate + H2O + H(+). It functions in the pathway amino-acid biosynthesis; L-lysine biosynthesis via DAP pathway; (S)-tetrahydrodipicolinate from L-aspartate: step 3/4. Functionally, catalyzes the condensation of (S)-aspartate-beta-semialdehyde [(S)-ASA] and pyruvate to 4-hydroxy-tetrahydrodipicolinate (HTPA). The protein is 4-hydroxy-tetrahydrodipicolinate synthase of Chlorobium phaeobacteroides (strain BS1).